A 291-amino-acid polypeptide reads, in one-letter code: Methylsterol monooxygenase 1 (291 aa).

The next 2 helical transmembrane spans lie at 55 to 75 and 100 to 120; these read LIVH…FQFL and MLLF…YYFT. A Fatty acid hydroxylase domain is found at 145 to 274; that stretch reads CAVIEDTWHY…FTWWDRLFDT (130 aa). The Histidine box-1 motif lies at 157–161; it reads HRALH. The short motif at 170 to 174 is the Histidine box-2 element; sequence HKVHH. The helical transmembrane segment at 199–219 threads the bilayer; the sequence is FFIGTMVFCNHMILLWAWVTF. A Histidine box-3 motif is present at residues 249-255; sequence FHDFHHM.

This sequence belongs to the sterol desaturase family. Fe cation serves as cofactor.

The protein localises to the endoplasmic reticulum membrane. The enzyme catalyses 4,4-dimethyl-5alpha-cholest-7-en-3beta-ol + 6 Fe(II)-[cytochrome b5] + 3 O2 + 5 H(+) = 4alpha-carboxy-4beta-methyl-5alpha-cholest-7-ene-3beta-ol + 6 Fe(III)-[cytochrome b5] + 4 H2O. It participates in steroid biosynthesis; zymosterol biosynthesis; zymosterol from lanosterol: step 3/6. Catalyzes the first step in the removal of the two C-4 methyl groups of 4,4-dimethylzymosterol. The sequence is that of Methylsterol monooxygenase 1 (msmo1) from Danio rerio (Zebrafish).